Here is a 173-residue protein sequence, read N- to C-terminus: Cytochrome b6-f complex subunit 4, chloroplastic (173 aa).

Residues 1-14 (ESALERRSSSVVMN) constitute a chloroplast transit peptide. 3 helical membrane-spanning segments follow: residues 49–69 (LLYM…GLAV), 108–128 (LLGV…PFIE), and 144–164 (SVFL…TLPI).

This sequence belongs to the cytochrome b family. PetD subfamily. In terms of assembly, the 4 large subunits of the cytochrome b6-f complex are cytochrome b6, subunit IV (17 kDa polypeptide, petD), cytochrome f and the Rieske protein, while the 4 small subunits are petG, petL, petM and petN. The complex functions as a dimer.

The protein resides in the plastid. Its subcellular location is the chloroplast thylakoid membrane. In terms of biological role, component of the cytochrome b6-f complex, which mediates electron transfer between photosystem II (PSII) and photosystem I (PSI), cyclic electron flow around PSI, and state transitions. This Euglena gracilis protein is Cytochrome b6-f complex subunit 4, chloroplastic.